A 260-amino-acid chain; its full sequence is NAD-capped RNA hydrolase NudC (260 aa).

Substrate-binding residues include Lys25 and Arg69. Zn(2+) contacts are provided by Cys98 and Cys101. Residue Glu111 coordinates substrate. Positions 116 and 119 each coordinate Zn(2+). Tyr124 provides a ligand contact to substrate. The region spanning 125-248 is the Nudix hydrolase domain; that stretch reads PQIAPCVIVA…TVARRLIEDT (124 aa). Residues Ala158, Glu174, and Glu178 each contribute to the a divalent metal cation site. The Nudix box signature appears at 159–180; the sequence is GFVEVGETLEQAVSREVLEESN. 192-199 serves as a coordination point for substrate; the sequence is QPWPFPHS. A divalent metal cation is bound at residue Glu219. Ala241 lines the substrate pocket.

It belongs to the Nudix hydrolase family. NudC subfamily. Homodimer. The cofactor is Mg(2+). It depends on Mn(2+) as a cofactor. Zn(2+) is required as a cofactor.

It catalyses the reaction a 5'-end NAD(+)-phospho-ribonucleoside in mRNA + H2O = a 5'-end phospho-adenosine-phospho-ribonucleoside in mRNA + beta-nicotinamide D-ribonucleotide + 2 H(+). It carries out the reaction NAD(+) + H2O = beta-nicotinamide D-ribonucleotide + AMP + 2 H(+). The catalysed reaction is NADH + H2O = reduced beta-nicotinamide D-ribonucleotide + AMP + 2 H(+). MRNA decapping enzyme that specifically removes the nicotinamide adenine dinucleotide (NAD) cap from a subset of mRNAs by hydrolyzing the diphosphate linkage to produce nicotinamide mononucleotide (NMN) and 5' monophosphate mRNA. The NAD-cap is present at the 5'-end of some mRNAs and stabilizes RNA against 5'-processing. Has preference for mRNAs with a 5'-end purine. Catalyzes the hydrolysis of a broad range of dinucleotide pyrophosphates. The sequence is that of NAD-capped RNA hydrolase NudC from Yersinia pestis bv. Antiqua (strain Antiqua).